A 115-amino-acid chain; its full sequence is Large ribosomal subunit protein eL36 (115 aa).

The protein belongs to the eukaryotic ribosomal protein eL36 family. In terms of assembly, component of the large ribosomal subunit.

The protein resides in the cytoplasm. It localises to the cytosol. Component of the large ribosomal subunit. The polypeptide is Large ribosomal subunit protein eL36 (RpL36) (Drosophila melanogaster (Fruit fly)).